The sequence spans 307 residues: Malate dehydrogenase (307 aa).

NAD(+)-binding positions include 8–13 and aspartate 33; that span reads GAGRVG. Substrate contacts are provided by arginine 82 and arginine 88. NAD(+)-binding positions include asparagine 95 and 118 to 120; that span reads VSN. Substrate-binding residues include asparagine 120 and arginine 151. Histidine 175 functions as the Proton acceptor in the catalytic mechanism.

This sequence belongs to the LDH/MDH superfamily. MDH type 3 family.

The enzyme catalyses (S)-malate + NAD(+) = oxaloacetate + NADH + H(+). In terms of biological role, catalyzes the reversible oxidation of malate to oxaloacetate. The protein is Malate dehydrogenase of Thioalkalivibrio sulfidiphilus (strain HL-EbGR7).